Consider the following 448-residue polypeptide: Bifunctional protein GlmU (448 aa).

Residues 1–232 (MSERSLLVVV…VDEVAGVNSR (232 aa)) form a pyrophosphorylase region. Residues 11 to 14 (LAAG), Lys-25, Gln-78, and 83 to 84 (GT) each bind UDP-N-acetyl-alpha-D-glucosamine. Residue Asp-108 coordinates Mg(2+). UDP-N-acetyl-alpha-D-glucosamine contacts are provided by Gly-144, Glu-158, Asn-173, and Asn-230. Asn-230 is a binding site for Mg(2+). Residues 233–253 (LQLAEAEAILQGRLRRAAMAG) are linker. The N-acetyltransferase stretch occupies residues 254 to 448 (GATLVAPETV…LRAARGKPKV (195 aa)). The UDP-N-acetyl-alpha-D-glucosamine site is built by Arg-319 and Lys-337. The Proton acceptor role is filled by His-349. UDP-N-acetyl-alpha-D-glucosamine contacts are provided by Tyr-352 and Asn-363. Residues Ala-366, 372 to 373 (NY), Ser-409, and Arg-426 each bind acetyl-CoA.

In the N-terminal section; belongs to the N-acetylglucosamine-1-phosphate uridyltransferase family. The protein in the C-terminal section; belongs to the transferase hexapeptide repeat family. Homotrimer. Mg(2+) is required as a cofactor.

Its subcellular location is the cytoplasm. The enzyme catalyses alpha-D-glucosamine 1-phosphate + acetyl-CoA = N-acetyl-alpha-D-glucosamine 1-phosphate + CoA + H(+). It carries out the reaction N-acetyl-alpha-D-glucosamine 1-phosphate + UTP + H(+) = UDP-N-acetyl-alpha-D-glucosamine + diphosphate. The protein operates within nucleotide-sugar biosynthesis; UDP-N-acetyl-alpha-D-glucosamine biosynthesis; N-acetyl-alpha-D-glucosamine 1-phosphate from alpha-D-glucosamine 6-phosphate (route II): step 2/2. It participates in nucleotide-sugar biosynthesis; UDP-N-acetyl-alpha-D-glucosamine biosynthesis; UDP-N-acetyl-alpha-D-glucosamine from N-acetyl-alpha-D-glucosamine 1-phosphate: step 1/1. Its pathway is bacterial outer membrane biogenesis; LPS lipid A biosynthesis. Catalyzes the last two sequential reactions in the de novo biosynthetic pathway for UDP-N-acetylglucosamine (UDP-GlcNAc). The C-terminal domain catalyzes the transfer of acetyl group from acetyl coenzyme A to glucosamine-1-phosphate (GlcN-1-P) to produce N-acetylglucosamine-1-phosphate (GlcNAc-1-P), which is converted into UDP-GlcNAc by the transfer of uridine 5-monophosphate (from uridine 5-triphosphate), a reaction catalyzed by the N-terminal domain. The sequence is that of Bifunctional protein GlmU from Azorhizobium caulinodans (strain ATCC 43989 / DSM 5975 / JCM 20966 / LMG 6465 / NBRC 14845 / NCIMB 13405 / ORS 571).